An 845-amino-acid polypeptide reads, in one-letter code: Proto-oncogene vav (845 aa).

The Calponin-homology (CH) domain occupies 1–119 (MELWRQCTHW…YTLSALSWTP (119 aa)). Positions 194–373 (KRCCCLREIQ…RDLAQCVNEV (180 aa)) constitute a DH domain. Residues 402–504 (RPKIDGELKI…WMEQFEMAIS (103 aa)) enclose the PH domain. The Phorbol-ester/DAG-type zinc-finger motif lies at 515–564 (GHDFQMFSFEETTSCKACQMLLRGTFYQGYRCYRCRAPAHKECLGRVPPC). The SH3 1 domain occupies 592-660 (LGLPKMEVFQ…PCNRVHPYVH (69 aa)). The SH2 domain maps to 671 to 765 (WYAGPMERAG…SLDTTLQFPY (95 aa)). In terms of domain architecture, SH3 2 spans 782–842 (KYFGTAKARY…PSNYVEEDYS (61 aa)). Residues Tyr826 and Tyr844 each carry the phosphotyrosine modification.

In terms of assembly, interacts with SHB. Interacts with APS, DOCK2, GRB2, GRB3, DOCK2, SLA, TEC and ZNF655/VIK. Interacts with SIAH2; without leading to its degradation. Associates with BLNK, PLCG1, GRB2 and NCK1 in a B-cell antigen receptor-dependent fashion. Interacts with CBLB; which inhibits tyrosine phosphorylation and down-regulates activity. May interact with CCPG1. Interacts with CLNK. Interacts with THEMIS2. Interacts with NEK3 and this interaction is prolactin-dependent. Interacts with ITK. Interacts with PTK2B/PYK2. Interacts with HCK. Interacts with PTK2B/PYK2. Interacts (via SH2 domain) with SYK. Interacts with ANKRD54. Interacts with CD6. Interacts with isoform 2 of CRACR2A. Interacts with LCP2; this interaction plays a role in TCR-mediated cytokine production. Post-translationally, phosphorylated by FYN. Phosphorylated on tyrosine residues by HCK in response to IFNG and bacterial lipopolysaccharide (LPS). In terms of tissue distribution, widely expressed in hematopoietic cells but not in other cell types. Found in the spleen and lung.

Its function is as follows. Couples tyrosine kinase signals with the activation of the Rho/Rac GTPases, thus leading to cell differentiation and/or proliferation. The protein is Proto-oncogene vav (Vav1) of Mus musculus (Mouse).